We begin with the raw amino-acid sequence, 87 residues long: Translation initiation factor IF-1 2 (87 aa).

Residues M1–K72 form the S1-like domain.

The protein belongs to the IF-1 family. In terms of assembly, component of the 30S ribosomal translation pre-initiation complex which assembles on the 30S ribosome in the order IF-2 and IF-3, IF-1 and N-formylmethionyl-tRNA(fMet); mRNA recruitment can occur at any time during PIC assembly.

It localises to the cytoplasm. One of the essential components for the initiation of protein synthesis. Stabilizes the binding of IF-2 and IF-3 on the 30S subunit to which N-formylmethionyl-tRNA(fMet) subsequently binds. Helps modulate mRNA selection, yielding the 30S pre-initiation complex (PIC). Upon addition of the 50S ribosomal subunit IF-1, IF-2 and IF-3 are released leaving the mature 70S translation initiation complex. The polypeptide is Translation initiation factor IF-1 2 (Burkholderia vietnamiensis (strain G4 / LMG 22486) (Burkholderia cepacia (strain R1808))).